We begin with the raw amino-acid sequence, 355 residues long: Uroporphyrinogen decarboxylase (355 aa).

Substrate-binding positions include 27–31, aspartate 78, tyrosine 155, serine 210, and histidine 328; that span reads RQAGR.

It belongs to the uroporphyrinogen decarboxylase family. As to quaternary structure, homodimer.

The protein localises to the cytoplasm. It catalyses the reaction uroporphyrinogen III + 4 H(+) = coproporphyrinogen III + 4 CO2. It functions in the pathway porphyrin-containing compound metabolism; protoporphyrin-IX biosynthesis; coproporphyrinogen-III from 5-aminolevulinate: step 4/4. Catalyzes the decarboxylation of four acetate groups of uroporphyrinogen-III to yield coproporphyrinogen-III. In Pseudomonas fluorescens (strain ATCC BAA-477 / NRRL B-23932 / Pf-5), this protein is Uroporphyrinogen decarboxylase.